The sequence spans 501 residues: MLTPRVLRALGWTGLFFLLLSPSNVLGASLSRDLETPPFLSFDPSNISINGAPLTEVPHAPSTESVSTNSESTNEHTITETTGKNAYIHNNASTDKQNANDTHKTPNILCDTEEVFVFLNETGRFVCTLKVDPPSDSEWSNFVLDLIFNPIEYHANEKNVEAARIAGLYGVPGSDYAYPRQSELISSIRRDPQGTFWTSPSPHGNKYFIWINKTTNTMGVEIRNVDYADNGYMQVIMRDHFNRPLIDKHIYIRVCQRPASVDVLAPPVLSGENYKASCIVRHFYPPGSVYVSWRQNGNIATPRKDRDGSFWWFESGRGATLVSTITLGNSGIDFPPKISCLVAWKQGDMISTTNATAIPTVYHHPRLSLAFKDGYAICTIECVPSEITVRWLVHDEAQPNTTYNTVVTGLCRTIDRHRNLLSRIPVWDNWTKTKYTCRLIGYPFDEDKFQDSEYYDATPSARGTPMVITVTAVLGLAVILGMGIIMTALCLYNSTRKNIRL.

Positions Met1–Gly27 are cleaved as a signal peptide. Over Ala28–Pro465 the chain is Virion surface. N-linked (GlcNAc...) asparagine; by host glycosylation is present at Asn46. The disordered stretch occupies residues Pro53 to Ala86. Residues Ser62–Ser72 show a composition bias toward low complexity. 7 N-linked (GlcNAc...) asparagine; by host glycosylation sites follow: Asn91, Asn100, Asn120, Asn212, Asn354, Asn400, and Asn429. Residues Pro258–Thr356 form the Ig-like domain. Residues Met466–Tyr492 traverse the membrane as a helical segment. At Asn493–Leu501 the chain is on the cytoplasmic side.

The protein belongs to the herpesviridae glycoprotein C family.

It is found in the secreted. The protein resides in the host cell membrane. May play an immunoevasive role in the pathogenesis of Marek's disease. It is a candidate for causing the early-stage immunosuppression that occurs after MDHV infection. The polypeptide is Envelope glycoprotein C homolog (gC) (Gallus gallus (Chicken)).